Consider the following 269-residue polypeptide: 2-keto-4-pentenoate hydratase (269 aa).

The protein belongs to the hydratase/decarboxylase family. MhpD subfamily. It depends on a divalent metal cation as a cofactor.

It catalyses the reaction (S)-4-hydroxy-2-oxopentanoate = (2Z)-2-hydroxypenta-2,4-dienoate + H2O. It participates in aromatic compound metabolism; 3-phenylpropanoate degradation. Catalyzes the conversion of 2-hydroxypentadienoic acid (enolic form of 2-oxopent-4-enoate) to 4-hydroxy-2-ketopentanoic acid. This is 2-keto-4-pentenoate hydratase from Paraburkholderia xenovorans (strain LB400).